Reading from the N-terminus, the 433-residue chain is Isocitrate dehydrogenase [NADP], chloroplastic (433 aa).

Residues 1 to 21 (QFSPNLSFSAFFPIITFTTAT) constitute a chloroplast transit peptide. NADP(+) contacts are provided by residues 98–100 (TIT) and Arg105. Thr100 contacts substrate. Substrate-binding positions include 117–123 (SPNGTIR), Arg132, and Arg155. Asp275 serves as a coordination point for Mn(2+). NADP(+) is bound at residue Lys283. Asp298 serves as a coordination point for Mn(2+). NADP(+)-binding positions include 333-338 (GTVTRH) and Asn351.

Belongs to the isocitrate and isopropylmalate dehydrogenases family. The cofactor is Mg(2+). Mn(2+) serves as cofactor. As to expression, detected in all tissues examined.

It is found in the plastid. The protein resides in the chloroplast. The enzyme catalyses D-threo-isocitrate + NADP(+) = 2-oxoglutarate + CO2 + NADPH. The polypeptide is Isocitrate dehydrogenase [NADP], chloroplastic (Medicago sativa (Alfalfa)).